Here is a 230-residue protein sequence, read N- to C-terminus: Cytidylate kinase (230 aa).

14–22 provides a ligand contact to ATP; the sequence is GPSGVGKSS.

It belongs to the cytidylate kinase family. Type 1 subfamily.

The protein localises to the cytoplasm. The enzyme catalyses CMP + ATP = CDP + ADP. It carries out the reaction dCMP + ATP = dCDP + ADP. The sequence is that of Cytidylate kinase from Buchnera aphidicola subsp. Baizongia pistaciae (strain Bp).